Reading from the N-terminus, the 301-residue chain is Acetylglutamate kinase (301 aa).

Residues 68 to 69 (GG), arginine 90, and asparagine 195 each bind substrate.

It belongs to the acetylglutamate kinase family. ArgB subfamily.

Its subcellular location is the cytoplasm. It carries out the reaction N-acetyl-L-glutamate + ATP = N-acetyl-L-glutamyl 5-phosphate + ADP. Its pathway is amino-acid biosynthesis; L-arginine biosynthesis; N(2)-acetyl-L-ornithine from L-glutamate: step 2/4. Functionally, catalyzes the ATP-dependent phosphorylation of N-acetyl-L-glutamate. This is Acetylglutamate kinase from Pseudomonas putida (strain ATCC 700007 / DSM 6899 / JCM 31910 / BCRC 17059 / LMG 24140 / F1).